A 211-amino-acid polypeptide reads, in one-letter code: Protein-L-isoaspartate O-methyltransferase (211 aa).

Residue Ser-60 is part of the active site.

Belongs to the methyltransferase superfamily. L-isoaspartyl/D-aspartyl protein methyltransferase family.

It is found in the cytoplasm. It catalyses the reaction [protein]-L-isoaspartate + S-adenosyl-L-methionine = [protein]-L-isoaspartate alpha-methyl ester + S-adenosyl-L-homocysteine. In terms of biological role, catalyzes the methyl esterification of L-isoaspartyl residues in peptides and proteins that result from spontaneous decomposition of normal L-aspartyl and L-asparaginyl residues. It plays a role in the repair and/or degradation of damaged proteins. The polypeptide is Protein-L-isoaspartate O-methyltransferase (Pseudomonas syringae pv. syringae (strain B728a)).